The following is a 185-amino-acid chain: NADH-quinone oxidoreductase subunit B (185 aa).

Cysteine 38, cysteine 39, cysteine 104, and cysteine 133 together coordinate [4Fe-4S] cluster. The span at 165-176 (AAEAYREEERQA) shows a compositional bias: basic and acidic residues. Positions 165-185 (AAEAYREEERQAARSALGPRS) are disordered.

It belongs to the complex I 20 kDa subunit family. NDH-1 is composed of 14 different subunits. Subunits NuoB, C, D, E, F, and G constitute the peripheral sector of the complex. [4Fe-4S] cluster serves as cofactor.

The protein resides in the cell membrane. It carries out the reaction a quinone + NADH + 5 H(+)(in) = a quinol + NAD(+) + 4 H(+)(out). In terms of biological role, NDH-1 shuttles electrons from NADH, via FMN and iron-sulfur (Fe-S) centers, to quinones in the respiratory chain. The immediate electron acceptor for the enzyme in this species is believed to be ubiquinone. Couples the redox reaction to proton translocation (for every two electrons transferred, four hydrogen ions are translocated across the cytoplasmic membrane), and thus conserves the redox energy in a proton gradient. The sequence is that of NADH-quinone oxidoreductase subunit B from Thermomicrobium roseum (strain ATCC 27502 / DSM 5159 / P-2).